The chain runs to 150 residues: D-aminoacyl-tRNA deacylase (150 aa).

The Gly-cisPro motif, important for rejection of L-amino acids motif lies at 138 to 139 (GP).

Belongs to the DTD family. Homodimer.

Its subcellular location is the cytoplasm. It carries out the reaction glycyl-tRNA(Ala) + H2O = tRNA(Ala) + glycine + H(+). It catalyses the reaction a D-aminoacyl-tRNA + H2O = a tRNA + a D-alpha-amino acid + H(+). An aminoacyl-tRNA editing enzyme that deacylates mischarged D-aminoacyl-tRNAs. Also deacylates mischarged glycyl-tRNA(Ala), protecting cells against glycine mischarging by AlaRS. Acts via tRNA-based rather than protein-based catalysis; rejects L-amino acids rather than detecting D-amino acids in the active site. By recycling D-aminoacyl-tRNA to D-amino acids and free tRNA molecules, this enzyme counteracts the toxicity associated with the formation of D-aminoacyl-tRNA entities in vivo and helps enforce protein L-homochirality. This chain is D-aminoacyl-tRNA deacylase, found in Chlorobaculum tepidum (strain ATCC 49652 / DSM 12025 / NBRC 103806 / TLS) (Chlorobium tepidum).